A 256-amino-acid polypeptide reads, in one-letter code: Chlorophyll a-b binding protein CP24 10A, chloroplastic (256 aa).

Transmembrane regions (helical) follow at residues 106-126 (WAMAAVLGIFVGQAWSGIPWF) and 134-154 (AIAPFSFGTLLGTQLILMGWV).

This sequence belongs to the ELIP/psbS family.

It localises to the plastid. Its subcellular location is the chloroplast thylakoid membrane. In Solanum lycopersicum (Tomato), this protein is Chlorophyll a-b binding protein CP24 10A, chloroplastic (CAP10A).